Consider the following 527-residue polypeptide: Probable malate:quinone oxidoreductase 2 (527 aa).

It belongs to the MQO family. FAD serves as cofactor.

It catalyses the reaction (S)-malate + a quinone = a quinol + oxaloacetate. It functions in the pathway carbohydrate metabolism; tricarboxylic acid cycle; oxaloacetate from (S)-malate (quinone route): step 1/1. The sequence is that of Probable malate:quinone oxidoreductase 2 from Pseudomonas putida (strain ATCC 47054 / DSM 6125 / CFBP 8728 / NCIMB 11950 / KT2440).